The primary structure comprises 89 residues: Small ribosomal subunit protein uS15 (89 aa).

The protein belongs to the universal ribosomal protein uS15 family. As to quaternary structure, part of the 30S ribosomal subunit. Forms a bridge to the 50S subunit in the 70S ribosome, contacting the 23S rRNA.

Functionally, one of the primary rRNA binding proteins, it binds directly to 16S rRNA where it helps nucleate assembly of the platform of the 30S subunit by binding and bridging several RNA helices of the 16S rRNA. Its function is as follows. Forms an intersubunit bridge (bridge B4) with the 23S rRNA of the 50S subunit in the ribosome. The chain is Small ribosomal subunit protein uS15 from Prochlorococcus marinus (strain MIT 9515).